A 140-amino-acid polypeptide reads, in one-letter code: MRRMTDISPDKFAKAAEAIYEIFEKVVENHDEILDAIDKLLILERKGVFDEIVKFSEFKVPFTPDEIREIAERFEMLIKILLSVDERVLKVIKRLIDAFEESMVYEQMGMMEAMKALRDPDVQKAIGFALTLAKNFGKRI.

This sequence to B.subtilis YrhD.

This is an uncharacterized protein from Archaeoglobus fulgidus (strain ATCC 49558 / DSM 4304 / JCM 9628 / NBRC 100126 / VC-16).